Reading from the N-terminus, the 37-residue chain is Large ribosomal subunit protein bL36c (37 aa).

This sequence belongs to the bacterial ribosomal protein bL36 family.

The protein resides in the plastid. The protein localises to the chloroplast. This is Large ribosomal subunit protein bL36c from Phaeodactylum tricornutum (strain CCAP 1055/1).